The following is a 654-amino-acid chain: Translation factor GUF1, mitochondrial (654 aa).

Residues 57–237 (ENYRNFSIVA…SVIKNIPSPV (181 aa)) form the tr-type G domain. Residues 66–73 (AHVDHGKS), 130–134 (DTPGH), and 184–187 (NKID) each bind GTP.

It belongs to the TRAFAC class translation factor GTPase superfamily. Classic translation factor GTPase family. LepA subfamily.

The protein localises to the mitochondrion inner membrane. It carries out the reaction GTP + H2O = GDP + phosphate + H(+). In terms of biological role, promotes mitochondrial protein synthesis. May act as a fidelity factor of the translation reaction, by catalyzing a one-codon backward translocation of tRNAs on improperly translocated ribosomes. Binds to mitochondrial ribosomes in a GTP-dependent manner. The polypeptide is Translation factor GUF1, mitochondrial (Candida albicans (strain WO-1) (Yeast)).